A 129-amino-acid chain; its full sequence is Small ribosomal subunit protein uS11 (129 aa).

This sequence belongs to the universal ribosomal protein uS11 family. Part of the 30S ribosomal subunit. Interacts with proteins S7 and S18. Binds to IF-3.

Located on the platform of the 30S subunit, it bridges several disparate RNA helices of the 16S rRNA. Forms part of the Shine-Dalgarno cleft in the 70S ribosome. The sequence is that of Small ribosomal subunit protein uS11 from Azotobacter vinelandii (strain DJ / ATCC BAA-1303).